Here is a 92-residue protein sequence, read N- to C-terminus: Large ribosomal subunit protein uL23c (92 aa).

This sequence belongs to the universal ribosomal protein uL23 family. Part of the 50S ribosomal subunit.

The protein resides in the plastid. It localises to the chloroplast. Functionally, binds to 23S rRNA. The sequence is that of Large ribosomal subunit protein uL23c (rpl23) from Chara vulgaris (Common stonewort).